The sequence spans 71 residues: uncharacterized protein (71 aa).

Residues 1–16 (MAKSQAKKKRGHRLRN) show a composition bias toward basic residues. Disordered stretches follow at residues 1–39 (MAKS…RMTK) and 51–71 (KNPY…QKAA). A compositionally biased stretch (polar residues) spans 25–35 (RGSTPSFSTHG). The span at 51-64 (KNPYDHTAVDDKDF) shows a compositional bias: basic and acidic residues.

This is an uncharacterized protein from Bacillus subtilis (strain 168).